The sequence spans 377 residues: 3-dehydroquinate synthase (377 aa).

Residues 113–117 (GVIGD), 137–138 (TT), Lys-150, and Lys-159 contribute to the NAD(+) site. Zn(2+) is bound by residues Glu-192, His-254, and His-273.

It belongs to the sugar phosphate cyclases superfamily. Dehydroquinate synthase family. Co(2+) serves as cofactor. The cofactor is Zn(2+). It depends on NAD(+) as a cofactor.

It is found in the cytoplasm. It carries out the reaction 7-phospho-2-dehydro-3-deoxy-D-arabino-heptonate = 3-dehydroquinate + phosphate. The protein operates within metabolic intermediate biosynthesis; chorismate biosynthesis; chorismate from D-erythrose 4-phosphate and phosphoenolpyruvate: step 2/7. Functionally, catalyzes the conversion of 3-deoxy-D-arabino-heptulosonate 7-phosphate (DAHP) to dehydroquinate (DHQ). This chain is 3-dehydroquinate synthase, found in Bartonella bacilliformis (strain ATCC 35685 / KC583 / Herrer 020/F12,63).